The chain runs to 424 residues: CinA-like protein (424 aa).

The protein belongs to the CinA family.

This is CinA-like protein from Prochlorococcus marinus (strain MIT 9312).